The following is a 188-amino-acid chain: UPF0301 protein ABO_0112 (188 aa).

The protein belongs to the UPF0301 (AlgH) family.

This Alcanivorax borkumensis (strain ATCC 700651 / DSM 11573 / NCIMB 13689 / SK2) protein is UPF0301 protein ABO_0112.